The sequence spans 828 residues: BEN domain-containing protein 3 (828 aa).

Residue Lys-20 forms a Glycyl lysine isopeptide (Lys-Gly) (interchain with G-Cter in SUMO); alternate linkage. A Glycyl lysine isopeptide (Lys-Gly) (interchain with G-Cter in SUMO1); alternate cross-link involves residue Lys-20. A Glycyl lysine isopeptide (Lys-Gly) (interchain with G-Cter in SUMO2); alternate cross-link involves residue Lys-20. Glycyl lysine isopeptide (Lys-Gly) (interchain with G-Cter in SUMO2) cross-links involve residues Lys-41, Lys-56, Lys-58, Lys-73, Lys-128, Lys-129, Lys-137, Lys-142, and Lys-158. A Nuclear localization signal motif is present at residues 56–58 (KRK). Phosphoserine is present on Ser-164. The tract at residues 164-184 (SPSSLRLLNEPQKRDCGSTGA) is disordered. Lys-176 participates in a covalent cross-link: Glycyl lysine isopeptide (Lys-Gly) (interchain with G-Cter in SUMO2). The region spanning 242-343 (PPPEYQLTAA…DFFSRFWAQR (102 aa)) is the BEN 1 domain. Position 379 is a phosphoserine (Ser-379). The BEN 2 domain maps to 387-487 (ASDHVVDTQD…DELEGLGLDA (101 aa)). Lys-427 participates in a covalent cross-link: Glycyl lysine isopeptide (Lys-Gly) (interchain with G-Cter in SUMO2). The segment at 483–504 (LGLDAGSEGDPPRDDCYDSSSL) is disordered. Ser-489 carries the post-translational modification Phosphoserine. A Glycyl lysine isopeptide (Lys-Gly) (interchain with G-Cter in SUMO); alternate cross-link involves residue Lys-512. Residue Lys-512 forms a Glycyl lysine isopeptide (Lys-Gly) (interchain with G-Cter in SUMO2); alternate linkage. Lys-528 is covalently cross-linked (Glycyl lysine isopeptide (Lys-Gly) (interchain with G-Cter in SUMO2)). The BEN 3 domain maps to 548–650 (VPGADCLLSK…ERCRRRDTEQ (103 aa)). Residue Lys-700 forms a Glycyl lysine isopeptide (Lys-Gly) (interchain with G-Cter in SUMO2) linkage. Positions 715 to 816 (VPSPYLLSDK…ERCRRPNRKK (102 aa)) constitute a BEN 4 domain.

Homooligomer, probably a homooctamer. Interacts with HDAC2 and HDAC3, but not HDAC1. Interacts with SALL4. Interacts with SMARCA5/SNF2H, BAZ2A/TIP5 and USP21. Interacts with the nucleosome remodeling and histone deacetylase (NuRD) repressor complex. Interacts (via BEN domains 1 and 3) with ERCC6L (via N-terminal TPR repeat); the interaction is direct. Post-translationally, sumoylated at Lys-20 by SUMO1 and at Lys-512 by SUMO1, SUMO2 and SUMO3. Sumoylation probably occurs sequentially, with that of Lys-20 preceding that of Lys-512. It does not alter association with heterochromatin, but is required for the repression of transcription. Expressed at least in heart, kidney, liver, ovary and spleen, with highest levels in spleen and lowest in heart. Expressed on the surface of T-cells.

It localises to the nucleus. The protein resides in the nucleolus. Transcriptional repressor which associates with the NoRC (nucleolar remodeling complex) complex and plays a key role in repressing rDNA transcription. The sumoylated form modulates the stability of the NoRC complex component BAZ2A/TIP5 by controlling its USP21-mediated deubiquitination. Binds to unmethylated major satellite DNA and is involved in the recruitment of the Polycomb repressive complex 2 (PRC2) to major satellites. Stimulates the ERCC6L translocase and ATPase activities. The chain is BEN domain-containing protein 3 (BEND3) from Homo sapiens (Human).